The sequence spans 507 residues: ATP synthase subunit alpha, chloroplastic (507 aa).

170-177 (GDRQTGKT) provides a ligand contact to ATP.

Belongs to the ATPase alpha/beta chains family. F-type ATPases have 2 components, CF(1) - the catalytic core - and CF(0) - the membrane proton channel. CF(1) has five subunits: alpha(3), beta(3), gamma(1), delta(1), epsilon(1). CF(0) has four main subunits: a, b, b' and c.

It is found in the plastid. It localises to the chloroplast thylakoid membrane. It carries out the reaction ATP + H2O + 4 H(+)(in) = ADP + phosphate + 5 H(+)(out). Functionally, produces ATP from ADP in the presence of a proton gradient across the membrane. The alpha chain is a regulatory subunit. The protein is ATP synthase subunit alpha, chloroplastic of Oenothera glazioviana (Large-flowered evening primrose).